Consider the following 178-residue polypeptide: Large ribosomal subunit protein uL5 (178 aa).

It belongs to the universal ribosomal protein uL5 family. As to quaternary structure, part of the 50S ribosomal subunit; contacts the 5S rRNA and probably tRNA. Forms a bridge to the 30S subunit in the 70S ribosome.

In terms of biological role, this is one of the proteins that bind and probably mediate the attachment of the 5S RNA into the large ribosomal subunit, where it forms part of the central protuberance. In the 70S ribosome it contacts protein S13 of the 30S subunit (bridge B1b), connecting the 2 subunits; this bridge is implicated in subunit movement. May contact the P site tRNA; the 5S rRNA and some of its associated proteins might help stabilize positioning of ribosome-bound tRNAs. The protein is Large ribosomal subunit protein uL5 of Sulfolobus acidocaldarius (strain ATCC 33909 / DSM 639 / JCM 8929 / NBRC 15157 / NCIMB 11770).